A 369-amino-acid chain; its full sequence is Transmembrane protein 144 homolog A (369 aa).

10 helical membrane passes run 6–26 (VIGYIGSAAAIIGFGSNYVPV), 35–55 (LSYAFILSIGGLCVAFIAMMI), 63–83 (PIGILGGSLWAMANLLIIPII), 85–105 (LVGLGLGVLLWSSIGIVVGFF), 122–142 (DWMNWLGFVGIVISIFCFFFI), 221–241 (VAGISMSIICGVLLGVNMIPM), 256–276 (IIFSQFAGVFLFNAFTFMFYA), 288–308 (TVFPSFISGVMWGIANCGLMI), 318–338 (GYPISCSGPMIISSLWSVFYF), and 347–367 (LLILCGSFLFLISGIILLAFS).

This sequence belongs to the TMEM144 family.

Its subcellular location is the membrane. In Dictyostelium discoideum (Social amoeba), this protein is Transmembrane protein 144 homolog A (tmem144A).